The sequence spans 360 residues: Glutamate 5-kinase (360 aa).

Lys7 is a binding site for ATP. The substrate site is built by Ser47, Asp134, and Asn146. ATP is bound by residues 166 to 167 and 210 to 216; these read TD and TGGITTK. One can recognise a PUA domain in the interval 275–348; the sequence is VGQITLDEGA…LNKKENINSS (74 aa).

This sequence belongs to the glutamate 5-kinase family.

It is found in the cytoplasm. The enzyme catalyses L-glutamate + ATP = L-glutamyl 5-phosphate + ADP. It functions in the pathway amino-acid biosynthesis; L-proline biosynthesis; L-glutamate 5-semialdehyde from L-glutamate: step 1/2. In terms of biological role, catalyzes the transfer of a phosphate group to glutamate to form L-glutamate 5-phosphate. The protein is Glutamate 5-kinase of Prochlorococcus marinus subsp. pastoris (strain CCMP1986 / NIES-2087 / MED4).